Consider the following 386-residue polypeptide: MNDTPENPHVPVGEKLQKVLARLGVGSRRDVEVWIAEGRVNVNGSVASLGQRVDSHDAITVDGHLIRREEAAESVRRVLIYNKPEGEVCTRDDPEGRPTIFDRLPRLRTGRWINVGRLDINTTGLLLFTTDGELANRLMHPSYEMDREYAVRVRGEVTEEMIERLLNGVMLEDGPAKFSDIQQAPGGEGFNHWYHCVVMEGRNREVRRLWESQGLVVSRLKRVRFGPVFLTSELTMGRYREMDQREIDILSEEVGLKPVALPGMTTKAREKAERQQRKQARPLARSERPEAGRKRAPRREDGENAARRAPASRPARGPQPSAERKGREQGTPVAERPRESNRKPRPSKPRDERPASAPGDKPAARKPQVKRRPKPAGDGMRPGFRR.

Residues 14 to 75 (EKLQKVLARL…IRREEAAESV (62 aa)) form the S4 RNA-binding domain. The active-site Nucleophile is the D119. The interval 260 to 386 (ALPGMTTKAR…GDGMRPGFRR (127 aa)) is disordered. 2 stretches are compositionally biased toward basic and acidic residues: residues 267 to 276 (KAREKAERQQ) and 284 to 306 (ARSERPEAGRKRAPRREDGENAA). The span at 307–321 (RRAPASRPARGPQPS) shows a compositional bias: low complexity. Over residues 335–354 (ERPRESNRKPRPSKPRDERP) the composition is skewed to basic and acidic residues.

This sequence belongs to the pseudouridine synthase RsuA family.

It catalyses the reaction uridine(2605) in 23S rRNA = pseudouridine(2605) in 23S rRNA. Functionally, responsible for synthesis of pseudouridine from uracil-2605 in 23S ribosomal RNA. The protein is Ribosomal large subunit pseudouridine synthase B (rluB) of Pseudomonas aeruginosa (strain ATCC 15692 / DSM 22644 / CIP 104116 / JCM 14847 / LMG 12228 / 1C / PRS 101 / PAO1).